A 335-amino-acid polypeptide reads, in one-letter code: Biotin synthase (335 aa).

The region spanning 43–269 (YFGKKVKLNM…INPTKEIRIA (227 aa)) is the Radical SAM core domain. [4Fe-4S] cluster is bound by residues cysteine 61, cysteine 65, and cysteine 68. Positions 104, 137, 197, and 267 each coordinate [2Fe-2S] cluster.

This sequence belongs to the radical SAM superfamily. Biotin synthase family. In terms of assembly, homodimer. It depends on [4Fe-4S] cluster as a cofactor. The cofactor is [2Fe-2S] cluster.

The catalysed reaction is (4R,5S)-dethiobiotin + (sulfur carrier)-SH + 2 reduced [2Fe-2S]-[ferredoxin] + 2 S-adenosyl-L-methionine = (sulfur carrier)-H + biotin + 2 5'-deoxyadenosine + 2 L-methionine + 2 oxidized [2Fe-2S]-[ferredoxin]. Its pathway is cofactor biosynthesis; biotin biosynthesis; biotin from 7,8-diaminononanoate: step 2/2. Its function is as follows. Catalyzes the conversion of dethiobiotin (DTB) to biotin by the insertion of a sulfur atom into dethiobiotin via a radical-based mechanism. The chain is Biotin synthase from Staphylococcus aureus (strain MSSA476).